Here is a 115-residue protein sequence, read N- to C-terminus: Probable non-functional immunoglobulin heavy variable 8-51-1 (115 aa).

The first 17 residues, 1–17, serve as a signal peptide directing secretion; sequence MLVCVLLYSFRLFGIQG. The framework-1 stretch occupies residues 18-42; it reads EAQLTESGGDLVHLEGPLRLSCAAS. The Ig-like domain occupies 19-115; that stretch reads AQLTESGGDL…QNMAAFNCAG (97 aa). Residues 43–50 are complementarity-determining-1; it reads WFTFSIYE. Residues 51–67 are framework-2; it reads IHWVCQASGKGLEWVAV. An intrachain disulfide couples cysteine 55 to cysteine 113. Positions 68 to 75 are complementarity-determining-2; it reads IWRGESHQ. The framework-3 stretch occupies residues 76–113; it reads YNADYVRGRLTTSRDNTKYMLYMQMISLRTQNMAAFNC. The segment at 114-115 is complementarity-determining-3; the sequence is AG.

As to quaternary structure, immunoglobulins are composed of two identical heavy chains and two identical light chains; disulfide-linked.

It is found in the secreted. Its subcellular location is the cell membrane. Functionally, probable non-functional open reading frame (ORF) of V region of the variable domain of immunoglobulin heavy chains. Non-functional ORF generally cannot participate in the synthesis of a productive immunoglobulin chain due to altered V-(D)-J or switch recombination and/or splicing site (at mRNA level) and/or conserved amino acid change (protein level). Immunoglobulins, also known as antibodies, are membrane-bound or secreted glycoproteins produced by B lymphocytes. In the recognition phase of humoral immunity, the membrane-bound immunoglobulins serve as receptors which, upon binding of a specific antigen, trigger the clonal expansion and differentiation of B lymphocytes into immunoglobulins-secreting plasma cells. Secreted immunoglobulins mediate the effector phase of humoral immunity, which results in the elimination of bound antigens. The antigen binding site is formed by the variable domain of one heavy chain, together with that of its associated light chain. Thus, each immunoglobulin has two antigen binding sites with remarkable affinity for a particular antigen. The variable domains are assembled by a process called V-(D)-J rearrangement and can then be subjected to somatic hypermutations which, after exposure to antigen and selection, allow affinity maturation for a particular antigen. This chain is Probable non-functional immunoglobulin heavy variable 8-51-1, found in Homo sapiens (Human).